Here is a 330-residue protein sequence, read N- to C-terminus: Aspartate--ammonia ligase (330 aa).

It belongs to the class-II aminoacyl-tRNA synthetase family. AsnA subfamily.

Its subcellular location is the cytoplasm. The catalysed reaction is L-aspartate + NH4(+) + ATP = L-asparagine + AMP + diphosphate + H(+). It participates in amino-acid biosynthesis; L-asparagine biosynthesis; L-asparagine from L-aspartate (ammonia route): step 1/1. The chain is Aspartate--ammonia ligase from Cronobacter sakazakii (strain ATCC BAA-894) (Enterobacter sakazakii).